The chain runs to 365 residues: MAPKDFFPPAPLDLDWDNIGIKVREVNGHVECAYNVATESWSEPQVVKGIDLTISGLSPALNYGQQAYEGMKAFRDPQGQIHIFRPEVHAARMAHSCEVVSIPPIPQVQFIRSVALAVSVNAEFVPPFDSSAALYIRPLAFGSGPQINLAQPEEYTFCVFVLPVTSLLGTKPVDALIMEEFDRTAPMGSGNAKVGGNYAPVLRWAAKARARGYGIPLHLDSKTRTEIDEFSAAGFIGVRDDDGKTTIVVPDSSCIIQSVTSDSCVQLARSYGWSVEVRPIKYTELPEFSEVLAVGTAAVIVPIGSITRDSLRDLIVYKPSEDGGYPCADKLFKSIKDIQRGLGKDVFNWCVPVHEPGAYFQPVSA.

Arg92 is a pyridoxal 5'-phosphate binding site. Lys193 is modified (N6-(pyridoxal phosphate)lysine). Glu229 is a binding site for pyridoxal 5'-phosphate.

This sequence belongs to the class-IV pyridoxal-phosphate-dependent aminotransferase family. Pyridoxal 5'-phosphate is required as a cofactor.

The protein operates within secondary metabolite biosynthesis. Functionally, aminotransferase; part of the gene cluster that mediates the biosynthesis of oxaleimides, cytotoxic compounds containing an unusual disubstituted succinimide moiety. The first step of the pathway is provided by the HR-PKS poxF that serves in a new mode of collaborative biosynthesis with the PKS-NRPS poxE, by providing the olefin containing amino acid substrate via the synthesis of an ACP-bound dec-4-enoate. The cytochrome P450 monooxygenase poxM-catalyzed oxidation at the alpha-position creates the enzyme-bound 2-hydroxydec-4-enoyl-ACP thioester, which may be prone to spontaneous hydrolysis to yield 2-hydroxydec-4-enoic acid due to increased electrophilicity of the carbonyl. 2-hydroxydec-4-enoic acid can then be further oxidized by poxM to yield the alpha-ketoacid 2-oxodec-4-enoicacid, which is reductively aminated by the aminotransferase poxL to yield (S,E)-2-aminodec-4-enoic acid. The Hybrid PKS-NRPS synthetase poxE then performs condensation between the octaketide product of its PKS modules and the amino group of (S,E)-2-aminodec-4-enoic acid which is activated and incorporated by the adenylation domain. The resulting aminoacyl product can be cyclized by the Diels-Alderase PoxQ and reductively released by the reductive (R) domain of poxE to yield an aldehyde intermediate. The released aldehyde is then substrate for a Knoevenagel condensation by the hydrolyase poxO followed by an oxidation at the 5-position of the pyrrolidone ring. The presence of the olefin from the amino acid building block allows for migration of the substituted allyl group to occur. This allylic transposition reaction takes place in a conjugate addition, semipinacol-like fashion to yield a succinimide intermediate. Iterative two-electron oxidations of the C7 methyl of the succinimide intermediate to the carboxylic acid can be catalyzed by one of two remaining cytochrome P450 monooxygenasess poxC or poxD to yield oxaleimide A. Subsequent oxidation yields the maleimide scaffold oxaleimide I. Both oxaleimide A and oxaleimide I can undergo oxidative modifications in the decalin ring to yield the series of products oxaleimides B to H. The sequence is that of Aminotransferase poxL from Penicillium oxalicum (strain 114-2 / CGMCC 5302) (Penicillium decumbens).